We begin with the raw amino-acid sequence, 586 residues long: MDQLYLEIEISTQNAETTIYTSVSSFLALYTYRYLNEPKNIQVNFVATKIESGKIALRSSQLRRELTDQHITCREAAKLPAIRDLRLPIYEKDGNTFIAGTCAVCRELIARQPNTELRKLLGFKESCLLAPSEASIWTRFCEVDVVDVVSRLHEGLLLKAVPDEVVRFEQHMNEPVRMHNIYKQAREQANQTENGAKIKRKHRVQIDGRTPKEQLLIEHRFAEGISFTIADLILYPLLRIVFQHCGQMLPHFPLTSTWFSEIDSFDGTCAKILGDLYVPQAASQGEELLSIPDCDATSLYKADPKRYKPRNRIYTSQAEVDLALAKLSELQLVFSTDSEHTYGQQTIDWQKIEPTHAKSSALPQERLERKRQQLENMANAVVSLAQPGDRIVDFCSGTGHLAILLALKLPLCTIIVMENKSFSLAQAQKRALELELSNCVFYQCNIDYFVGRFDIGASLHACGTATDIVLQQCRRSVAHFVCCPCCYGSLQPMPHISYPLSQRFQRVLSTNDYLYIAHTADQAHEMGTTNCKPETTLQGLQCMSIVDTDRKLQSEEAGYQVILTRLKPEQCTPKNHLLVGRFVKQN.

In terms of domain architecture, GST C-terminal spans 121–276 (LGFKESCLLA…GTCAKILGDL (156 aa)).

The protein belongs to the GSTCD family.

This Drosophila pseudoobscura pseudoobscura (Fruit fly) protein is Glutathione S-transferase C-terminal domain-containing protein homolog.